Here is a 119-residue protein sequence, read N- to C-terminus: MSTTRGVSSSSAAAALALLLLFALCFFSFHFAAAARAVPRDEHQENGGVKAVAAVAADQLVLQLEGDTGNGDEVSELMGAAEEEAAACEEGKNNDECVQRRLLSDAHLDYIYTQHKNKP.

An N-terminal signal peptide occupies residues 1–34 (MSTTRGVSSSSAAAALALLLLFALCFFSFHFAAA). Positions 35 to 109 (ARAVPRDEHQ…RRLLSDAHLD (75 aa)) are excised as a propeptide. 2 positions are modified to sulfotyrosine: tyrosine 110 and tyrosine 112. The propeptide occupies 115 to 119 (HKNKP).

Belongs to the phytosulfokine family. Sulfation is important for activity and for the binding to a putative membrane receptor. In terms of processing, PSK-alpha is produced by endopeptidase digestion. PSK-beta is produced from PSK-alpha by exopeptidase digestion.

It localises to the secreted. Functionally, promotes plant cell differentiation, organogenesis and somatic embryogenesis as well as cell proliferation. The protein is Phytosulfokines 2 (PSK2) of Oryza sativa subsp. japonica (Rice).